Reading from the N-terminus, the 110-residue chain is Large ribosomal subunit protein uL22 (110 aa).

Belongs to the universal ribosomal protein uL22 family. Part of the 50S ribosomal subunit.

Its function is as follows. This protein binds specifically to 23S rRNA; its binding is stimulated by other ribosomal proteins, e.g. L4, L17, and L20. It is important during the early stages of 50S assembly. It makes multiple contacts with different domains of the 23S rRNA in the assembled 50S subunit and ribosome. Functionally, the globular domain of the protein is located near the polypeptide exit tunnel on the outside of the subunit, while an extended beta-hairpin is found that lines the wall of the exit tunnel in the center of the 70S ribosome. This Pasteurella multocida (strain Pm70) protein is Large ribosomal subunit protein uL22.